A 349-amino-acid polypeptide reads, in one-letter code: Holliday junction branch migration complex subunit RuvB (349 aa).

The tract at residues Met-1 to Tyr-186 is large ATPase domain (RuvB-L). ATP contacts are provided by residues Leu-25, Arg-26, Gly-67, Lys-70, Thr-71, Ser-72, Glu-133–Phe-135, Arg-176, Tyr-186, and Arg-223. Position 71 (Thr-71) interacts with Mg(2+). A small ATPAse domain (RuvB-S) region spans residues Glu-187–Asp-257. The head domain (RuvB-H) stretch occupies residues Glu-260–Ser-349. Residues Arg-315 and Arg-320 each contribute to the DNA site.

This sequence belongs to the RuvB family. Homohexamer. Forms an RuvA(8)-RuvB(12)-Holliday junction (HJ) complex. HJ DNA is sandwiched between 2 RuvA tetramers; dsDNA enters through RuvA and exits via RuvB. An RuvB hexamer assembles on each DNA strand where it exits the tetramer. Each RuvB hexamer is contacted by two RuvA subunits (via domain III) on 2 adjacent RuvB subunits; this complex drives branch migration. In the full resolvosome a probable DNA-RuvA(4)-RuvB(12)-RuvC(2) complex forms which resolves the HJ.

Its subcellular location is the cytoplasm. It carries out the reaction ATP + H2O = ADP + phosphate + H(+). Functionally, the RuvA-RuvB-RuvC complex processes Holliday junction (HJ) DNA during genetic recombination and DNA repair, while the RuvA-RuvB complex plays an important role in the rescue of blocked DNA replication forks via replication fork reversal (RFR). RuvA specifically binds to HJ cruciform DNA, conferring on it an open structure. The RuvB hexamer acts as an ATP-dependent pump, pulling dsDNA into and through the RuvAB complex. RuvB forms 2 homohexamers on either side of HJ DNA bound by 1 or 2 RuvA tetramers; 4 subunits per hexamer contact DNA at a time. Coordinated motions by a converter formed by DNA-disengaged RuvB subunits stimulates ATP hydrolysis and nucleotide exchange. Immobilization of the converter enables RuvB to convert the ATP-contained energy into a lever motion, pulling 2 nucleotides of DNA out of the RuvA tetramer per ATP hydrolyzed, thus driving DNA branch migration. The RuvB motors rotate together with the DNA substrate, which together with the progressing nucleotide cycle form the mechanistic basis for DNA recombination by continuous HJ branch migration. Branch migration allows RuvC to scan DNA until it finds its consensus sequence, where it cleaves and resolves cruciform DNA. The protein is Holliday junction branch migration complex subunit RuvB of Mycobacterium leprae (strain Br4923).